A 458-amino-acid chain; its full sequence is Cysteine--tRNA ligase (458 aa).

Cys-29 contributes to the Zn(2+) binding site. The 'HIGH' region signature appears at 31–41 (PTVYDNPHIGN). 3 residues coordinate Zn(2+): Cys-214, His-239, and Glu-243. The 'KMSKS' region motif lies at 272–276 (KMSKS). Lys-275 is a binding site for ATP.

It belongs to the class-I aminoacyl-tRNA synthetase family. In terms of assembly, monomer. Zn(2+) is required as a cofactor.

The protein localises to the cytoplasm. The enzyme catalyses tRNA(Cys) + L-cysteine + ATP = L-cysteinyl-tRNA(Cys) + AMP + diphosphate. This chain is Cysteine--tRNA ligase, found in Rickettsia bellii (strain OSU 85-389).